Reading from the N-terminus, the 495-residue chain is Glycerol kinase (495 aa).

Threonine 11 serves as a coordination point for ADP. Residues threonine 11, threonine 12, and serine 13 each contribute to the ATP site. Residue threonine 11 participates in sn-glycerol 3-phosphate binding. Sn-glycerol 3-phosphate-binding residues include arginine 81, glutamate 82, tyrosine 133, and aspartate 242. Residues arginine 81, glutamate 82, tyrosine 133, aspartate 242, and glutamine 243 each coordinate glycerol. 4 residues coordinate ADP: threonine 264, glycine 307, glycine 407, and asparagine 411. 3 residues coordinate ATP: threonine 264, glycine 307, and glycine 407.

This sequence belongs to the FGGY kinase family.

The enzyme catalyses glycerol + ATP = sn-glycerol 3-phosphate + ADP + H(+). It functions in the pathway polyol metabolism; glycerol degradation via glycerol kinase pathway; sn-glycerol 3-phosphate from glycerol: step 1/1. Inhibited by fructose 1,6-bisphosphate (FBP). Functionally, key enzyme in the regulation of glycerol uptake and metabolism. Catalyzes the phosphorylation of glycerol to yield sn-glycerol 3-phosphate. In Thermus brockianus, this protein is Glycerol kinase.